Consider the following 243-residue polypeptide: tRNA (guanine-N(1)-)-methyltransferase (243 aa).

S-adenosyl-L-methionine-binding positions include glycine 108 and 127 to 132 (LGDFVL).

The protein belongs to the RNA methyltransferase TrmD family. As to quaternary structure, homodimer.

It localises to the cytoplasm. The enzyme catalyses guanosine(37) in tRNA + S-adenosyl-L-methionine = N(1)-methylguanosine(37) in tRNA + S-adenosyl-L-homocysteine + H(+). Its function is as follows. Specifically methylates guanosine-37 in various tRNAs. The chain is tRNA (guanine-N(1)-)-methyltransferase from Streptococcus equi subsp. zooepidemicus (strain H70).